The primary structure comprises 332 residues: Succinylglutamate desuccinylase (332 aa).

Zn(2+)-binding residues include His59, Glu62, and His151. Residue Glu215 is part of the active site.

It belongs to the AspA/AstE family. Succinylglutamate desuccinylase subfamily. Zn(2+) is required as a cofactor.

The catalysed reaction is N-succinyl-L-glutamate + H2O = L-glutamate + succinate. Its pathway is amino-acid degradation; L-arginine degradation via AST pathway; L-glutamate and succinate from L-arginine: step 5/5. Transforms N(2)-succinylglutamate into succinate and glutamate. This chain is Succinylglutamate desuccinylase, found in Pseudomonas aeruginosa (strain LESB58).